Reading from the N-terminus, the 113-residue chain is Large ribosomal subunit protein uL22 (113 aa).

Belongs to the universal ribosomal protein uL22 family. As to quaternary structure, part of the 50S ribosomal subunit.

In terms of biological role, this protein binds specifically to 23S rRNA; its binding is stimulated by other ribosomal proteins, e.g. L4, L17, and L20. It is important during the early stages of 50S assembly. It makes multiple contacts with different domains of the 23S rRNA in the assembled 50S subunit and ribosome. Functionally, the globular domain of the protein is located near the polypeptide exit tunnel on the outside of the subunit, while an extended beta-hairpin is found that lines the wall of the exit tunnel in the center of the 70S ribosome. This is Large ribosomal subunit protein uL22 from Stenotrophomonas maltophilia (strain K279a).